The chain runs to 243 residues: 1-(5-phosphoribosyl)-5-[(5-phosphoribosylamino)methylideneamino] imidazole-4-carboxamide isomerase (243 aa).

Asp-8 acts as the Proton acceptor in catalysis. The active-site Proton donor is the Asp-130.

This sequence belongs to the HisA/HisF family.

The protein localises to the cytoplasm. The catalysed reaction is 1-(5-phospho-beta-D-ribosyl)-5-[(5-phospho-beta-D-ribosylamino)methylideneamino]imidazole-4-carboxamide = 5-[(5-phospho-1-deoxy-D-ribulos-1-ylimino)methylamino]-1-(5-phospho-beta-D-ribosyl)imidazole-4-carboxamide. Its pathway is amino-acid biosynthesis; L-histidine biosynthesis; L-histidine from 5-phospho-alpha-D-ribose 1-diphosphate: step 4/9. This chain is 1-(5-phosphoribosyl)-5-[(5-phosphoribosylamino)methylideneamino] imidazole-4-carboxamide isomerase, found in Methylococcus capsulatus (strain ATCC 33009 / NCIMB 11132 / Bath).